The primary structure comprises 295 residues: Probable adenylate kinase 6, chloroplastic (295 aa).

The transit peptide at 1-46 (MAVSHRLLRPATTTIKNTFSSLFIRSLSSSSSGSSLDPKIDLEEAA) directs the protein to the chloroplast. 74–79 (GVGKGT) is an ATP binding site. The NMP stretch occupies residues 94-123 (ATGDLVREELSSSGLLSSQLKELVNHGKLV). Residues T95, R100, 121–123 (KLV), 151–154 (GFPR), and Q158 each bind AMP. The tract at residues 187–235 (GRRICSECGGNYNVACIDIKGDDDTPRMYMPPLLPPPNCESKLISRADD) is LID. R188 serves as a coordination point for ATP. Residue R243 participates in AMP binding. G271 is a binding site for ATP.

It belongs to the adenylate kinase family. Monomer.

It localises to the plastid. The protein localises to the chloroplast. It carries out the reaction AMP + ATP = 2 ADP. Functionally, catalyzes the reversible transfer of the terminal phosphate group between ATP and AMP. Plays an important role in cellular energy homeostasis and in adenine nucleotide metabolism. The polypeptide is Probable adenylate kinase 6, chloroplastic (Arabidopsis thaliana (Mouse-ear cress)).